We begin with the raw amino-acid sequence, 319 residues long: Beta-ketoacyl-[acyl-carrier-protein] synthase III (319 aa).

Active-site residues include Cys-113 and His-246. The interval 247 to 251 (QANLR) is ACP-binding. Residue Asn-276 is part of the active site.

This sequence belongs to the thiolase-like superfamily. FabH family. Homodimer.

The protein resides in the cytoplasm. The catalysed reaction is malonyl-[ACP] + acetyl-CoA + H(+) = 3-oxobutanoyl-[ACP] + CO2 + CoA. It participates in lipid metabolism; fatty acid biosynthesis. Its function is as follows. Catalyzes the condensation reaction of fatty acid synthesis by the addition to an acyl acceptor of two carbons from malonyl-ACP. Catalyzes the first condensation reaction which initiates fatty acid synthesis and may therefore play a role in governing the total rate of fatty acid production. Possesses both acetoacetyl-ACP synthase and acetyl transacylase activities. Its substrate specificity determines the biosynthesis of branched-chain and/or straight-chain of fatty acids. This chain is Beta-ketoacyl-[acyl-carrier-protein] synthase III, found in Laribacter hongkongensis (strain HLHK9).